A 145-amino-acid chain; its full sequence is uncharacterized protein (145 aa).

The signal sequence occupies residues methionine 1–alanine 20.

This is an uncharacterized protein from Aedes vexans (Inland floodwater mosquito).